A 248-amino-acid polypeptide reads, in one-letter code: Sulfur carrier protein FdhD (248 aa).

C99 functions as the Cysteine persulfide intermediate in the catalytic mechanism. Position 232-237 (232-237) interacts with Mo-bis(molybdopterin guanine dinucleotide); the sequence is FVRGKR.

This sequence belongs to the FdhD family.

It localises to the cytoplasm. Functionally, required for formate dehydrogenase (FDH) activity. Acts as a sulfur carrier protein that transfers sulfur from IscS to the molybdenum cofactor prior to its insertion into FDH. The protein is Sulfur carrier protein FdhD of Methanothermobacter thermautotrophicus (strain ATCC 29096 / DSM 1053 / JCM 10044 / NBRC 100330 / Delta H) (Methanobacterium thermoautotrophicum).